The primary structure comprises 341 residues: Cyclic GMP-AMP synthase-like receptor (341 aa).

Residues S64 and 77 to 79 (EFD) contribute to the ATP site. E77, D79, and D172 together coordinate Mg(2+). D172 is a GTP binding site. Residues K230 and 246 to 250 (SYHIK) contribute to the ATP site. A Mn(2+)-binding site is contributed by E258.

Belongs to the mab-21 family. The cofactor is Mg(2+). Mn(2+) is required as a cofactor.

The catalysed reaction is GTP + ATP = 2',3'-cGAMP + 2 diphosphate. It catalyses the reaction GTP + ATP = pppGp(2'-5')A + diphosphate. The enzyme catalyses pppGp(2'-5')A = 2',3'-cGAMP + diphosphate. In terms of biological role, nucleotidyltransferase that catalyzes the formation of cyclic GMP-AMP (2',3'-cGAMP) from ATP and GTP and plays a key role in innate immunity. Acts as a key sensor of double-stranded RNA (dsRNA), the presence of dsRNA in the cytoplasm being a danger signal that triggers the immune responses. Directly binds dsRNA, activating the nucleotidyltransferase activity, leading to synthesis of 2',3'-cGAMP, a second messenger that binds to and activates Sting, thereby triggering the immune response via activation of the NF-kappa-B transcription factor. This is Cyclic GMP-AMP synthase-like receptor from Hydra vulgaris (Hydra).